Here is a 62-residue protein sequence, read N- to C-terminus: MTIVFQLTMFALIAISFLLIIGVPITFASPDGWSSNKNIVFSGVSLWIVLVFAVGILNSFIS.

2 consecutive transmembrane segments (helical) span residues 8–28 and 41–61; these read TMFA…ITFA and FSGV…NSFI.

The protein belongs to the PsbZ family. As to quaternary structure, PSII is composed of 1 copy each of membrane proteins PsbA, PsbB, PsbC, PsbD, PsbE, PsbF, PsbH, PsbI, PsbJ, PsbK, PsbL, PsbM, PsbT, PsbY, PsbZ, Psb30/Ycf12, at least 3 peripheral proteins of the oxygen-evolving complex and a large number of cofactors. It forms dimeric complexes.

It is found in the plastid. Its subcellular location is the chloroplast thylakoid membrane. In terms of biological role, may control the interaction of photosystem II (PSII) cores with the light-harvesting antenna, regulates electron flow through the 2 photosystem reaction centers. PSII is a light-driven water plastoquinone oxidoreductase, using light energy to abstract electrons from H(2)O, generating a proton gradient subsequently used for ATP formation. The protein is Photosystem II reaction center protein Z of Welwitschia mirabilis (Tree tumbo).